We begin with the raw amino-acid sequence, 282 residues long: Bifunctional protein FolD (282 aa).

Residues 165-167 (NRS), S190, and I231 each bind NADP(+).

The protein belongs to the tetrahydrofolate dehydrogenase/cyclohydrolase family. As to quaternary structure, homodimer.

The enzyme catalyses (6R)-5,10-methylene-5,6,7,8-tetrahydrofolate + NADP(+) = (6R)-5,10-methenyltetrahydrofolate + NADPH. It carries out the reaction (6R)-5,10-methenyltetrahydrofolate + H2O = (6R)-10-formyltetrahydrofolate + H(+). Its pathway is one-carbon metabolism; tetrahydrofolate interconversion. In terms of biological role, catalyzes the oxidation of 5,10-methylenetetrahydrofolate to 5,10-methenyltetrahydrofolate and then the hydrolysis of 5,10-methenyltetrahydrofolate to 10-formyltetrahydrofolate. This Clostridium botulinum (strain Kyoto / Type A2) protein is Bifunctional protein FolD.